The following is a 205-amino-acid chain: Holliday junction branch migration complex subunit RuvA (205 aa).

Positions 1 to 64 (MIGRIRGLLV…EDAQLLYGFI (64 aa)) are domain I. A domain II region spans residues 65–143 (SKQERALFRL…SLMEASVGSE (79 aa)). The flexible linker stretch occupies residues 144-156 (REFMLQSNYTAPV). The segment at 157 to 205 (VANTAEEDAIAALLSLGYKPAQASKAVSAVYVDGIDSESLIKSALKSML) is domain III.

The protein belongs to the RuvA family. In terms of assembly, homotetramer. Forms an RuvA(8)-RuvB(12)-Holliday junction (HJ) complex. HJ DNA is sandwiched between 2 RuvA tetramers; dsDNA enters through RuvA and exits via RuvB. An RuvB hexamer assembles on each DNA strand where it exits the tetramer. Each RuvB hexamer is contacted by two RuvA subunits (via domain III) on 2 adjacent RuvB subunits; this complex drives branch migration. In the full resolvosome a probable DNA-RuvA(4)-RuvB(12)-RuvC(2) complex forms which resolves the HJ.

Its subcellular location is the cytoplasm. Its function is as follows. The RuvA-RuvB-RuvC complex processes Holliday junction (HJ) DNA during genetic recombination and DNA repair, while the RuvA-RuvB complex plays an important role in the rescue of blocked DNA replication forks via replication fork reversal (RFR). RuvA specifically binds to HJ cruciform DNA, conferring on it an open structure. The RuvB hexamer acts as an ATP-dependent pump, pulling dsDNA into and through the RuvAB complex. HJ branch migration allows RuvC to scan DNA until it finds its consensus sequence, where it cleaves and resolves the cruciform DNA. This is Holliday junction branch migration complex subunit RuvA from Shewanella piezotolerans (strain WP3 / JCM 13877).